The sequence spans 560 residues: Dihydroxy-acid dehydratase (560 aa).

Asp80 is a binding site for Mg(2+). Cys121 provides a ligand contact to [2Fe-2S] cluster. Mg(2+)-binding residues include Asp122 and Lys123. N6-carboxylysine is present on Lys123. Cys194 contacts [2Fe-2S] cluster. Glu447 provides a ligand contact to Mg(2+). The Proton acceptor role is filled by Ser473.

It belongs to the IlvD/Edd family. As to quaternary structure, homodimer. It depends on [2Fe-2S] cluster as a cofactor. Requires Mg(2+) as cofactor.

It catalyses the reaction (2R)-2,3-dihydroxy-3-methylbutanoate = 3-methyl-2-oxobutanoate + H2O. The catalysed reaction is (2R,3R)-2,3-dihydroxy-3-methylpentanoate = (S)-3-methyl-2-oxopentanoate + H2O. The protein operates within amino-acid biosynthesis; L-isoleucine biosynthesis; L-isoleucine from 2-oxobutanoate: step 3/4. Its pathway is amino-acid biosynthesis; L-valine biosynthesis; L-valine from pyruvate: step 3/4. In terms of biological role, functions in the biosynthesis of branched-chain amino acids. Catalyzes the dehydration of (2R,3R)-2,3-dihydroxy-3-methylpentanoate (2,3-dihydroxy-3-methylvalerate) into 2-oxo-3-methylpentanoate (2-oxo-3-methylvalerate) and of (2R)-2,3-dihydroxy-3-methylbutanoate (2,3-dihydroxyisovalerate) into 2-oxo-3-methylbutanoate (2-oxoisovalerate), the penultimate precursor to L-isoleucine and L-valine, respectively. In Chlorobaculum tepidum (strain ATCC 49652 / DSM 12025 / NBRC 103806 / TLS) (Chlorobium tepidum), this protein is Dihydroxy-acid dehydratase.